Here is a 399-residue protein sequence, read N- to C-terminus: Putative gustatory receptor 59e (399 aa).

At 1–33 (MDSSYWENLLLTINRFLGVYPSGRVGVLRWLHT) the chain is on the cytoplasmic side. Residues 34–54 (LWSLFLLMYIWTGSIVKCLEF) form a helical membrane-spanning segment. Residues 55 to 65 (TVEIPTIEKLL) are Extracellular-facing. Residues 66–86 (YLMEFPGNMATIAILVYYAVL) form a helical membrane-spanning segment. Over 87–120 (NRPLAHGAELQIERIITGLKGKAKRLVYKRHGQR) the chain is Cytoplasmic. A helical transmembrane segment spans residues 121–141 (TLHLMATTLVFHGLCVLVDVV). At 142–206 (NYDFEFWTTW…RPPQGSTKLD (65 aa)) the chain is on the extracellular side. The chain crosses the membrane as a helical span at residues 207–227 (ACYESAFAVLVDAGGGSALMI). The Cytoplasmic portion of the chain corresponds to 228 to 250 (EEMRYTCNLIEQVHSQFLLRFGL). Residues 251-271 (YLVLNLLNSLVSICVELYLIF) form a helical membrane-spanning segment. The Extracellular segment spans residues 272 to 282 (NFFETPLWEES). The chain crosses the membrane as a helical span at residues 283–303 (VLLVYRLLWLAMHGGRIWFIL). Residues 304 to 361 (SVNEQILEQKCNLCQLLNELEVCSSRLQRTINRFLLQLQRSIDQPLEACGIVTLDTRS) lie on the Cytoplasmic side of the membrane. The helical transmembrane segment at 362–382 (LGGFIGVLMAIVIFLIQIGLG) threads the bilayer. N-linked (GlcNAc...) asparagine glycosylation is found at Asn-383 and Asn-392. At 383–399 (NKSLMGVALNRSNWVYV) the chain is on the extracellular side.

It belongs to the insect chemoreceptor superfamily. Gustatory receptor (GR) family. Gr10a subfamily. Expressed in the adult labellar chemosensory neurons. In larvae, is expressed in neurons of the terminal external chemosensory organ.

The protein resides in the cell membrane. Its function is as follows. Probable gustatory receptor which mediates acceptance or avoidance behavior, depending on its substrates. The protein is Putative gustatory receptor 59e (Gr59e) of Drosophila melanogaster (Fruit fly).